Consider the following 1933-residue polypeptide: Protein TIC 214 (1933 aa).

The next 6 helical transmembrane spans lie at 18–38, 60–80, 87–107, 128–148, 176–196, and 230–250; these read IVNS…FSIG, ATTG…YAPL, PHTI…FYTD, FSIQ…HFIL, VGWL…LVWI, and IFYI…PAPL. 4 disordered regions span residues 266-291, 473-514, 808-832, and 1066-1121; these read AKGK…VGVG, KTKS…SRDN, THRE…AEDP, and ESFT…SSNA. The span at 278–289 shows a compositional bias: acidic residues; that stretch reads EEGDVEKEDEVG. Positions 476–487 are enriched in polar residues; it reads SLSPEKTSGDNL. 2 stretches are compositionally biased toward basic and acidic residues: residues 488 to 514 and 819 to 832; these read ETSR…SRDN and DEKN…AEDP. The span at 1066–1078 shows a compositional bias: polar residues; the sequence is ESFTQISSPSSTN. The span at 1105–1115 shows a compositional bias: basic residues; the sequence is KEKKKKKRSLK. Residues 1135–1155 form a helical membrane-spanning segment; it reads LPVYLKLFIQRIYTGIFFSII. Residues 1562–1642 form a disordered region; that stretch reads NADNEKNEKK…SAESTTKKVT (81 aa). Residues 1564–1642 show a composition bias toward basic and acidic residues; that stretch reads DNEKNEKKEA…SAESTTKKVT (79 aa).

The protein belongs to the TIC214 family. In terms of assembly, part of the Tic complex.

The protein resides in the plastid. It localises to the chloroplast inner membrane. Its function is as follows. Involved in protein precursor import into chloroplasts. May be part of an intermediate translocation complex acting as a protein-conducting channel at the inner envelope. The polypeptide is Protein TIC 214 (Jasminum nudiflorum (Winter jasmine)).